The primary structure comprises 348 residues: Dihydroorotase (348 aa).

Residues His-17 and His-19 each coordinate Zn(2+). Substrate is bound by residues 19 to 21 (HLR) and Asn-45. Zn(2+) contacts are provided by Lys-103, His-140, and His-178. N6-carboxylysine is present on Lys-103. His-140 contributes to the substrate binding site. Residue Leu-223 coordinates substrate. A Zn(2+)-binding site is contributed by Asp-251. Residue Asp-251 is part of the active site. 2 residues coordinate substrate: His-255 and Ala-267.

The protein belongs to the metallo-dependent hydrolases superfamily. DHOase family. Class II DHOase subfamily. As to quaternary structure, homodimer. Zn(2+) serves as cofactor.

It catalyses the reaction (S)-dihydroorotate + H2O = N-carbamoyl-L-aspartate + H(+). The protein operates within pyrimidine metabolism; UMP biosynthesis via de novo pathway; (S)-dihydroorotate from bicarbonate: step 3/3. Its function is as follows. Catalyzes the reversible cyclization of carbamoyl aspartate to dihydroorotate. This Salmonella heidelberg (strain SL476) protein is Dihydroorotase.